The chain runs to 574 residues: Dihydroxy-acid dehydratase 2 (574 aa).

A disordered region spans residues 1–20 (MNAKTNIKQRLPSRHVTEGP). [2Fe-2S] cluster is bound at residue cysteine 56. Aspartate 88 contacts Mg(2+). Cysteine 129 provides a ligand contact to [2Fe-2S] cluster. Positions 130 and 131 each coordinate Mg(2+). Lysine 131 is subject to N6-carboxylysine. Cysteine 201 is a binding site for [2Fe-2S] cluster. Glutamate 451 provides a ligand contact to Mg(2+). Serine 477 (proton acceptor) is an active-site residue.

The protein belongs to the IlvD/Edd family. In terms of assembly, homodimer. [2Fe-2S] cluster is required as a cofactor. Requires Mg(2+) as cofactor.

It carries out the reaction (2R)-2,3-dihydroxy-3-methylbutanoate = 3-methyl-2-oxobutanoate + H2O. It catalyses the reaction (2R,3R)-2,3-dihydroxy-3-methylpentanoate = (S)-3-methyl-2-oxopentanoate + H2O. It participates in amino-acid biosynthesis; L-isoleucine biosynthesis; L-isoleucine from 2-oxobutanoate: step 3/4. Its pathway is amino-acid biosynthesis; L-valine biosynthesis; L-valine from pyruvate: step 3/4. Functionally, functions in the biosynthesis of branched-chain amino acids. Catalyzes the dehydration of (2R,3R)-2,3-dihydroxy-3-methylpentanoate (2,3-dihydroxy-3-methylvalerate) into 2-oxo-3-methylpentanoate (2-oxo-3-methylvalerate) and of (2R)-2,3-dihydroxy-3-methylbutanoate (2,3-dihydroxyisovalerate) into 2-oxo-3-methylbutanoate (2-oxoisovalerate), the penultimate precursor to L-isoleucine and L-valine, respectively. The protein is Dihydroxy-acid dehydratase 2 of Bradyrhizobium diazoefficiens (strain JCM 10833 / BCRC 13528 / IAM 13628 / NBRC 14792 / USDA 110).